The primary structure comprises 446 residues: D(1A) dopamine receptor (446 aa).

At 1 to 23 (MRTLNTSTMEGTGLVAERDFSFR) the chain is on the extracellular side. N-linked (GlcNAc...) asparagine glycosylation occurs at N5. Residues 24–49 (ILTACFLSLLILSTLLGNTLVCAAVI) traverse the membrane as a helical segment. Over 50 to 60 (RFRHLRSKVTN) the chain is Cytoplasmic. Residues 61 to 87 (FFVISLAVSDLLVAVLVMPWKAVAEIA) traverse the membrane as a helical segment. Residues 88–96 (GFWPFGSFC) lie on the Extracellular side of the membrane. Cysteines 96 and 186 form a disulfide. Residues 97–119 (NIWVAFDIMCSTASILNLCVISV) traverse the membrane as a helical segment. Residues 120 to 138 (DRYWAISSPFRYERKMTPK) lie on the Cytoplasmic side of the membrane. A helical transmembrane segment spans residues 139 to 163 (AAFILISVAWTLSVLISFIPVQLSW). Residues 164–192 (HKAKPTGPSEGNATSLGKTINNCDSSLSR) lie on the Extracellular side of the membrane. N175 is a glycosylation site (N-linked (GlcNAc...) asparagine). A helical transmembrane segment spans residues 193–218 (TYAISSSLISFYIPVAIMIVTYTRIY). The Cytoplasmic segment spans residues 219-272 (RIAQKQIRRISALERAAVHAKNCQTTTGNGNPMECSQPESSFKMSFKRETKVLK). A helical membrane pass occupies residues 273 to 299 (TLSVIMGVFVCCWLPFFILNCMVPFCG). The Extracellular segment spans residues 300-312 (SGETKPFCIDSIT). The helical transmembrane segment at 313-337 (FDVFVWFGWANSSLNPIIYAFNADF) threads the bilayer. Topologically, residues 338–446 (RKAFSTLLGC…PITQNGQHPT (109 aa)) are cytoplasmic. 2 S-palmitoyl cysteine lipidation sites follow: C347 and C351.

Belongs to the G-protein coupled receptor 1 family. In terms of assembly, interacts with DNAJC14 via its C-terminus. Interacts with DRD2. Interacts with DORIP1.

It is found in the cell membrane. Its subcellular location is the endoplasmic reticulum membrane. The protein resides in the cell projection. The protein localises to the cilium membrane. It localises to the dendrite. It is found in the dendritic spine. Dopamine receptor whose activity is mediated by G proteins which activate adenylyl cyclase. In Bos taurus (Bovine), this protein is D(1A) dopamine receptor (DRD1).